A 393-amino-acid polypeptide reads, in one-letter code: Branched-chain-amino-acid aminotransferase, mitochondrial (393 aa).

A mitochondrion-targeting transit peptide spans Met1–Cys27. Substrate is bound at residue Tyr169. Lys230 carries the N6-(pyridoxal phosphate)lysine modification. At Lys322 the chain carries N6-acetyllysine.

The protein belongs to the class-IV pyridoxal-phosphate-dependent aminotransferase family. As to quaternary structure, homodimer. It depends on pyridoxal 5'-phosphate as a cofactor. In terms of tissue distribution, expressed in all tissues.

It is found in the mitochondrion. It catalyses the reaction L-leucine + 2-oxoglutarate = 4-methyl-2-oxopentanoate + L-glutamate. The catalysed reaction is L-isoleucine + 2-oxoglutarate = (S)-3-methyl-2-oxopentanoate + L-glutamate. The enzyme catalyses L-valine + 2-oxoglutarate = 3-methyl-2-oxobutanoate + L-glutamate. Functionally, catalyzes the first reaction in the catabolism of the essential branched chain amino acids leucine, isoleucine, and valine. May also function as a transporter of branched chain alpha-keto acids. This is Branched-chain-amino-acid aminotransferase, mitochondrial (Bcat2) from Rattus norvegicus (Rat).